Here is a 484-residue protein sequence, read N- to C-terminus: tRNA-2-methylthio-N(6)-dimethylallyladenosine synthase (484 aa).

Residues 36-153 (GKLYIKTHGC…LPELIRARRE (118 aa)) form the MTTase N-terminal domain. [4Fe-4S] cluster contacts are provided by Cys45, Cys82, Cys116, Cys190, Cys194, and Cys197. The Radical SAM core domain maps to 176–415 (RAEGPSAFVS…HISAHAASIS (240 aa)). Residues 416 to 479 (QSMVGSVQRV…SNSLRGRIQL (64 aa)) form the TRAM domain. The segment at 428 to 450 (EGPSRRDPNELTGKSENMRPVNF) is disordered.

The protein belongs to the methylthiotransferase family. MiaB subfamily. In terms of assembly, monomer. The cofactor is [4Fe-4S] cluster.

The protein resides in the cytoplasm. It carries out the reaction N(6)-dimethylallyladenosine(37) in tRNA + (sulfur carrier)-SH + AH2 + 2 S-adenosyl-L-methionine = 2-methylsulfanyl-N(6)-dimethylallyladenosine(37) in tRNA + (sulfur carrier)-H + 5'-deoxyadenosine + L-methionine + A + S-adenosyl-L-homocysteine + 2 H(+). Its function is as follows. Catalyzes the methylthiolation of N6-(dimethylallyl)adenosine (i(6)A), leading to the formation of 2-methylthio-N6-(dimethylallyl)adenosine (ms(2)i(6)A) at position 37 in tRNAs that read codons beginning with uridine. The chain is tRNA-2-methylthio-N(6)-dimethylallyladenosine synthase from Xanthomonas oryzae pv. oryzae (strain KACC10331 / KXO85).